The sequence spans 518 residues: Nicotine N-demethylase CYP82E3 (518 aa).

Residues 2-22 (VFPVEAIVGLVTFTFLFYFLW) traverse the membrane as a helical segment. Lysine 254 participates in a covalent cross-link: Glycyl lysine isopeptide (Lys-Gly) (interchain with G-Cter in ubiquitin). Cysteine 458 is a binding site for heme.

It belongs to the cytochrome P450 family. CYP82E2 subfamily. It depends on heme as a cofactor. Expressed in leaves.

It is found in the membrane. It catalyses the reaction (S)-nicotine + reduced [NADPH--hemoprotein reductase] + O2 = (S)-nornicotine + formaldehyde + oxidized [NADPH--hemoprotein reductase] + H2O + H(+). It participates in alkaloid biosynthesis; nicotine biosynthesis. Functionally, involved in the biosynthesis of pyridine alkaloid natural products, leading mainly to the production of anabasine, anatabine, nicotine and nornicotine, effective deterrents against herbivores with antiparasitic and pesticide properties (neurotoxins); nornicotine serves as the precursor in the synthesis of the carcinogen compound N'-nitrosonornicotine (NNN). Catalyzes the demethylation of nicotine to form nornicotine. The sequence is that of Nicotine N-demethylase CYP82E3 from Nicotiana tomentosiformis (Tobacco).